We begin with the raw amino-acid sequence, 367 residues long: Anthranilate phosphoribosyltransferase (367 aa).

A compositionally biased stretch (low complexity) spans 1-17 (MVLSSEASSAADHSAAA). The tract at residues 1-22 (MVLSSEASSAADHSAAAPIPTS) is disordered. Residues G104, 107–108 (GD), T112, 114–117 (NLST), 132–140 (KHGNRAASS), and G144 each bind 5-phospho-alpha-D-ribose 1-diphosphate. G104 lines the anthranilate pocket. Residue S116 coordinates Mg(2+). N135 serves as a coordination point for anthranilate. R190 contacts anthranilate. D248 and E249 together coordinate Mg(2+).

The protein belongs to the anthranilate phosphoribosyltransferase family. Homodimer. Mg(2+) serves as cofactor.

It catalyses the reaction N-(5-phospho-beta-D-ribosyl)anthranilate + diphosphate = 5-phospho-alpha-D-ribose 1-diphosphate + anthranilate. The protein operates within amino-acid biosynthesis; L-tryptophan biosynthesis; L-tryptophan from chorismate: step 2/5. In terms of biological role, catalyzes the transfer of the phosphoribosyl group of 5-phosphorylribose-1-pyrophosphate (PRPP) to anthranilate to yield N-(5'-phosphoribosyl)-anthranilate (PRA). This chain is Anthranilate phosphoribosyltransferase, found in Mycobacterium marinum (strain ATCC BAA-535 / M).